The sequence spans 297 residues: Alpha-tubulin N-acetyltransferase 1 (297 aa).

Residues 1–186 (MEFDFDVHKI…NNFVVFDGFF (186 aa)) enclose the N-acetyltransferase domain. Acetyl-CoA contacts are provided by residues 120–133 (FYIH…GFGK) and 156–165 (SEKFLSFLRK). The tract at residues 269 to 297 (LHRTANSEQEDHSQRRRTSSLNRPQSIHH) is disordered. Over residues 287–297 (SSLNRPQSIHH) the composition is skewed to polar residues.

Belongs to the acetyltransferase ATAT1 family.

The protein resides in the cytoplasm. Its subcellular location is the membrane. It is found in the clathrin-coated pit. It localises to the cell junction. The protein localises to the focal adhesion. The protein resides in the cell projection. Its subcellular location is the axon. It is found in the cytoskeleton. It localises to the spindle. The catalysed reaction is L-lysyl-[alpha-tubulin] + acetyl-CoA = N(6)-acetyl-L-lysyl-[alpha-tubulin] + CoA + H(+). Its function is as follows. Specifically acetylates 'Lys-40' in alpha-tubulin on the lumenal side of microtubules. Promotes microtubule destabilization and accelerates microtubule dynamics; this activity may be independent of acetylation activity. Acetylates alpha-tubulin with a slow enzymatic rate, due to a catalytic site that is not optimized for acetyl transfer. Enters the microtubule through each end and diffuses quickly throughout the lumen of microtubules. Acetylates only long/old microtubules because of its slow acetylation rate since it does not have time to act on dynamically unstable microtubules before the enzyme is released. May be involved in neuron development. In Xenopus tropicalis (Western clawed frog), this protein is Alpha-tubulin N-acetyltransferase 1.